The chain runs to 415 residues: Homoserine O-acetyltransferase (415 aa).

The region spanning 47 to 369 (NAVLVCHGLT…HGHDAFLVEP (323 aa)) is the AB hydrolase-1 domain. The Nucleophile role is filled by serine 155. Arginine 226 contributes to the substrate binding site. Active-site residues include aspartate 329 and histidine 362. A substrate-binding site is contributed by aspartate 363. Residues 383–415 (GVAGRAVTDTAPDGGEPDEDEDFAPVHSSLFSR) form a disordered region.

The protein belongs to the AB hydrolase superfamily. MetX family. In terms of assembly, homodimer.

Its subcellular location is the cytoplasm. It catalyses the reaction L-homoserine + acetyl-CoA = O-acetyl-L-homoserine + CoA. It functions in the pathway amino-acid biosynthesis; L-methionine biosynthesis via de novo pathway; O-acetyl-L-homoserine from L-homoserine: step 1/1. Functionally, transfers an acetyl group from acetyl-CoA to L-homoserine, forming acetyl-L-homoserine. In Haloferax volcanii (strain ATCC 29605 / DSM 3757 / JCM 8879 / NBRC 14742 / NCIMB 2012 / VKM B-1768 / DS2) (Halobacterium volcanii), this protein is Homoserine O-acetyltransferase.